The chain runs to 177 residues: Large ribosomal subunit protein uL5 (177 aa).

It belongs to the universal ribosomal protein uL5 family. In terms of assembly, part of the 50S ribosomal subunit; part of the 5S rRNA/L5/L18/L25 subcomplex. Contacts the 5S rRNA and the P site tRNA. Forms a bridge to the 30S subunit in the 70S ribosome.

In terms of biological role, this is one of the proteins that bind and probably mediate the attachment of the 5S RNA into the large ribosomal subunit, where it forms part of the central protuberance. In the 70S ribosome it contacts protein S13 of the 30S subunit (bridge B1b), connecting the 2 subunits; this bridge is implicated in subunit movement. Contacts the P site tRNA; the 5S rRNA and some of its associated proteins might help stabilize positioning of ribosome-bound tRNAs. In Ehrlichia canis (strain Jake), this protein is Large ribosomal subunit protein uL5.